The primary structure comprises 340 residues: Glycerol-3-phosphate dehydrogenase [NAD(P)+] (340 aa).

NADPH-binding residues include serine 13, tryptophan 14, and lysine 108. Sn-glycerol 3-phosphate-binding residues include lysine 108, glycine 139, and serine 141. Residue alanine 143 participates in NADPH binding. Sn-glycerol 3-phosphate is bound by residues lysine 194, aspartate 247, serine 257, arginine 258, and asparagine 259. Lysine 194 serves as the catalytic Proton acceptor. Arginine 258 is a binding site for NADPH. The NADPH site is built by valine 282 and glutamate 284.

It belongs to the NAD-dependent glycerol-3-phosphate dehydrogenase family.

It localises to the cytoplasm. It catalyses the reaction sn-glycerol 3-phosphate + NAD(+) = dihydroxyacetone phosphate + NADH + H(+). The enzyme catalyses sn-glycerol 3-phosphate + NADP(+) = dihydroxyacetone phosphate + NADPH + H(+). The protein operates within membrane lipid metabolism; glycerophospholipid metabolism. Catalyzes the reduction of the glycolytic intermediate dihydroxyacetone phosphate (DHAP) to sn-glycerol 3-phosphate (G3P), the key precursor for phospholipid synthesis. This is Glycerol-3-phosphate dehydrogenase [NAD(P)+] from Streptococcus thermophilus (strain ATCC BAA-491 / LMD-9).